The sequence spans 475 residues: MRNYTQQYINGEWIDSDSNETIEVINPATEEVIGKVAKGNSNDVEKAVEAANNVYLEFRHSSVKERKELLDKIVEEYKNRKQDIIEAITDELGAPLTLSENVHYQMGLNHFEEASRALDSFEFEERRGDALVTKEAIGVSGLVTPWNFPTNQTSLKLAAAFAAGSPVVLKPSEETPFAAVILAEIFDKVGVPKGVFNLVNGDGEGVGNPLSEHPKVRMMSFTGSGRTGSKIMEKASKDFKKVSLELGGKSPYIVLDDVDVKEAAKATTGKVVNNTGQVCTAGTRILIPESKKEDFLTALKEEFSKVKVGDPREEGTQVGPIISKKQFDTVQSYIDKGIEEGAELFYGGPGKPEGLNTGYFARPTIFINVDNDMTIAQEEIFGPVASVITYNNLDEAIKIANDTKYGLAGYVIGKDKETLQKVARSIEAGRIEINEAGNQPDLPFGGYKQSGIGREWGDYGIEEFLEVKSIAGYFS.

201–207 (GDGEGVG) is an NAD(+) binding site. Residues Glu245 and Cys279 contribute to the active site.

Belongs to the aldehyde dehydrogenase family.

It carries out the reaction an aldehyde + NAD(+) + H2O = a carboxylate + NADH + 2 H(+). This chain is Putative aldehyde dehydrogenase SH0913, found in Staphylococcus haemolyticus (strain JCSC1435).